The chain runs to 545 residues: Chaperonin GroEL 2 (545 aa).

Residues 30–33 (TLGP), K51, 87–91 (DGTTT), G415, 479–481 (NAA), and D495 each bind ATP.

This sequence belongs to the chaperonin (HSP60) family. In terms of assembly, forms a cylinder of 14 subunits composed of two heptameric rings stacked back-to-back. Interacts with the co-chaperonin GroES.

The protein localises to the cytoplasm. The catalysed reaction is ATP + H2O + a folded polypeptide = ADP + phosphate + an unfolded polypeptide.. In terms of biological role, together with its co-chaperonin GroES, plays an essential role in assisting protein folding. The GroEL-GroES system forms a nano-cage that allows encapsulation of the non-native substrate proteins and provides a physical environment optimized to promote and accelerate protein folding. This chain is Chaperonin GroEL 2, found in Escherichia coli O1:K1 / APEC.